Consider the following 97-residue polypeptide: Unclassified hydrophobin F (97 aa).

The signal sequence occupies residues 1-17 (MRVSALAFAAVLSLVSA). Cystine bridges form between Cys24–Cys75, Cys39–Cys67, Cys40–Cys58, and Cys76–Cys85.

The protein localises to the secreted. It is found in the cell wall. Its function is as follows. Aerial growth, conidiation, and dispersal of filamentous fungi in the environment rely upon a capability of their secreting small amphipathic proteins called hydrophobins (HPBs) with low sequence identity. Class I can self-assemble into an outermost layer of rodlet bundles on aerial cell surfaces, conferring cellular hydrophobicity that supports fungal growth, development and dispersal; whereas Class II form highly ordered films at water-air interfaces through intermolecular interactions but contribute nothing to the rodlet structure. In P.expansum, hydrophobins contribute to germination, tolerance to cold stress and mycotoxins patulin and citrinin production. HfbC, HfbD, HfbE, and HfbF have functional redundancy in fungal surface hydrophobicity. This chain is Unclassified hydrophobin F, found in Penicillium expansum (Blue mold rot fungus).